A 342-amino-acid polypeptide reads, in one-letter code: Flap endonuclease 1 (342 aa).

The interval 1 to 99 is N-domain; it reads MGVKIGELIE…RAIEERVRAR (99 aa). Residues Asp28, Asp81, Glu153, Glu155, Asp174, Asp176, and Asp237 each contribute to the Mg(2+) site. An I-domain region spans residues 117–259; that stretch reads EARKYAQAAL…RALELVKKYK (143 aa).

It belongs to the XPG/RAD2 endonuclease family. FEN1 subfamily. In terms of assembly, interacts with PCNA. PCNA stimulates the nuclease activity without altering cleavage specificity. The cofactor is Mg(2+).

Structure-specific nuclease with 5'-flap endonuclease and 5'-3' exonuclease activities involved in DNA replication and repair. During DNA replication, cleaves the 5'-overhanging flap structure that is generated by displacement synthesis when DNA polymerase encounters the 5'-end of a downstream Okazaki fragment. Binds the unpaired 3'-DNA end and kinks the DNA to facilitate 5' cleavage specificity. Cleaves one nucleotide into the double-stranded DNA from the junction in flap DNA, leaving a nick for ligation. Also involved in the base excision repair (BER) pathway. Acts as a genome stabilization factor that prevents flaps from equilibrating into structures that lead to duplications and deletions. Also possesses 5'-3' exonuclease activity on nicked or gapped double-stranded DNA. This chain is Flap endonuclease 1, found in Korarchaeum cryptofilum (strain OPF8).